We begin with the raw amino-acid sequence, 136 residues long: Large ribosomal subunit protein uL16 (136 aa).

This sequence belongs to the universal ribosomal protein uL16 family. Part of the 50S ribosomal subunit.

Its function is as follows. Binds 23S rRNA and is also seen to make contacts with the A and possibly P site tRNAs. The sequence is that of Large ribosomal subunit protein uL16 from Rickettsia typhi (strain ATCC VR-144 / Wilmington).